Here is a 633-residue protein sequence, read N- to C-terminus: Telomere-binding protein 1 (633 aa).

Positions 253 to 272 (HAADRDDDENSSGCVHPSTS) are disordered. Residues 263–272 (SSGCVHPSTS) are compositionally biased toward polar residues. Positions 351 to 430 (VKLTIKSFNI…LNDIGFTLEC (80 aa)) constitute a Ubiquitin-like domain. The interval 506 to 615 (PFADPNSLAL…RVLAAQAYWS (110 aa)) is sufficient for telomeric DNA binding. The 60-residue stretch at 529–588 (GQRRIRRPFTVAEVELLVEAVEHLGTGRWRDVKFRAFENVHHRTYVDLKDKWKTLVHTAS) folds into the HTH myb-type domain. Residues 534 to 584 (RRPFTVAEVELLVEAVEHLGTGRWRDVKFRAFENVHHRTYVDLKDKWKTLV) form the SANT domain. Positions 557–584 (WRDVKFRAFENVHHRTYVDLKDKWKTLV) form a DNA-binding region, H-T-H motif.

Homodimer. As to expression, ubiquitous.

Its subcellular location is the chromosome. The protein localises to the telomere. In terms of biological role, binds the telomeric double-stranded 5'TTTAGGG-3' repeat and regulates telomere length and structure. The sequence is that of Telomere-binding protein 1 (TBP1) from Oryza sativa subsp. japonica (Rice).